Here is a 915-residue protein sequence, read N- to C-terminus: WD repeat-containing protein 44 (915 aa).

Residues 1–14 show a composition bias toward acidic residues; the sequence is MASESDTEEFYDAP. Residues 1 to 24 are disordered; the sequence is MASESDTEEFYDAPEDVHLGTGYP. At A2 the chain carries N-acetylalanine. The segment at 2-173 is binding activity; that stretch reads ASESDTEEFY…SSGEQLDASG (172 aa). S3 is subject to Phosphoserine. An FFAT-like motif motif is present at residues 9-15; sequence EFYDAPE. Y11 bears the Phosphotyrosine mark. S27, S50, S66, S71, S81, and S126 each carry phosphoserine. Disordered stretches follow at residues 79–102, 117–174, and 208–282; these read DDSL…VAGT, LQQD…ASGL, and VEEV…PKEN. The stretch at 114–139 forms a coiled coil; that stretch reads EHELQQDSEKAESQNVAEESELETQK. Residues 146–155 show a composition bias toward basic and acidic residues; the sequence is TCEKSEKTVD. Residues T161 and T221 each carry the phosphothreonine modification. Residues 213–259 form an important for interaction with ARHGAP26 AND ARHGAP10 region; the sequence is PAKPPRHLTPEPDIVASTKKPVPARPPPPTNFPPPRPPPPSRPAPPP. A compositionally biased stretch (pro residues) spans 235–258; the sequence is PARPPPPTNFPPPRPPPPSRPAPP. The residue at position 264 (S264) is a Phosphoserine. A compositionally biased stretch (basic and acidic residues) spans 264-280; the sequence is SELEFEALKTPDLDVPK. At T273 the chain carries Phosphothreonine. An important for interaction with RAB11A region spans residues 336-349; it reads VMGPQRPRSNSGRE. S344 and S346 each carry phosphoserine. 2 positions are modified to phosphothreonine: T351 and T403. Disordered stretches follow at residues 399–425 and 461–481; these read SNDA…RLKQ and DEVF…GMPY. 4 positions are modified to phosphoserine: S405, S472, S473, and S474. Acidic residues predominate over residues 469–478; it reads DDPSSSDDEG. At Y481 the chain carries Phosphotyrosine. A WD 1 repeat occupies 511–550; that stretch reads EHMGAVWTMKFSHCGRLLASAGQDNIVRIWALKNAFDYFN. The tract at residues 559-593 is disordered; it reads EGRVSPSPSQESLSSSKSDTDMGVCSGTDEDPDDK. Phosphoserine is present on residues S563 and S567. Over residues 563 to 575 the composition is skewed to low complexity; that stretch reads SPSPSQESLSSSK. WD repeat units lie at residues 607 to 645, 647 to 687, 692 to 731, 742 to 781, 786 to 825, 840 to 880, and 882 to 915; these read GHTA…CLCC, QHID…VALW, GQTK…YHTQ, KVGR…LSMK, VNSS…SKFT, AHNA…EVLD, and TSTG…KTVS.

Interacts with the GTP-bound form of RAB11 when membrane-associated. Interacts with GRAF1/ARHGAP26 or GRAF2/ARHGAP10; the interaction connects the endoplasmic reticulum (ER) with the endosomal tubule. Interacts (via FFAT-like motif) with VAPA (via MSP domain) or VAPB (via MSP domain); the interaction connects the ER with the endosomal tubule. Does not bind to other Rab and Rho small G proteins. In terms of processing, phosphorylated by ATK1; the phosphorylation stabilizes its interaction with RAB11A and RAB11B.

Its subcellular location is the cytoplasm. It localises to the cytosol. It is found in the perinuclear region. The protein localises to the endosome membrane. The protein resides in the golgi apparatus. Its subcellular location is the trans-Golgi network. Functionally, downstream effector for Rab11 which regulates Rab11 intracellular membrane trafficking functions such as endocytic recycling, intracellular ciliogenesis and protein export. ATK1-mediated phosphorylation of WDR44 induces binding to Rab11 which activates endocytic recycling of transferrin receptor back to the plasma membrane. When bound to Rab11, prevents the formation of the ciliogenic Rab11-Rabin8/RAB3IP-RAB11FIP3 complex, therefore inhibiting preciliary trafficking and ciliogenesis. Participates in neo-synthesized protein export by connecting the endoplasmic reticulum (ER) with the endosomal tubule via direct interactions with the integral ER proteins VAPA or VAPB and the endosomal protein GRAFs (GRAF1/ARHGAP26 or GRAF2/ARHGAP10), which facilitates the transfer of proteins such as E-cadherin, MPP14 and CFTR into a Rab8-Rab10-Rab11-dependent export route. This is WD repeat-containing protein 44 from Mus musculus (Mouse).